The sequence spans 486 residues: UDP-N-acetylmuramate--L-alanine ligase (486 aa).

126-132 contributes to the ATP binding site; it reads GTHGKTT.

It belongs to the MurCDEF family.

It is found in the cytoplasm. The catalysed reaction is UDP-N-acetyl-alpha-D-muramate + L-alanine + ATP = UDP-N-acetyl-alpha-D-muramoyl-L-alanine + ADP + phosphate + H(+). It functions in the pathway cell wall biogenesis; peptidoglycan biosynthesis. Its function is as follows. Cell wall formation. The sequence is that of UDP-N-acetylmuramate--L-alanine ligase from Pectobacterium carotovorum subsp. carotovorum (strain PC1).